A 372-amino-acid chain; its full sequence is F-box/kelch-repeat protein At2g44630 (372 aa).

The segment covering 1-13 (MSNADEPPQKTNQ) has biased composition (polar residues). The segment at 1 to 21 (MSNADEPPQKTNQPPSSSLTP) is disordered. In terms of domain architecture, F-box spans 21 to 67 (PPSLFSLPVDIVLNILALVPKRYYPILCCVSKSLRSLIRSPEIHKTR). 2 Kelch repeats span residues 136 to 181 (EIYC…LVGG) and 183 to 228 (IYVI…SVSL).

The chain is F-box/kelch-repeat protein At2g44630 from Arabidopsis thaliana (Mouse-ear cress).